A 290-amino-acid chain; its full sequence is 33 kDa chaperonin (290 aa).

2 disulfide bridges follow: cysteine 235-cysteine 237 and cysteine 268-cysteine 271.

It belongs to the HSP33 family. Post-translationally, under oxidizing conditions two disulfide bonds are formed involving the reactive cysteines. Under reducing conditions zinc is bound to the reactive cysteines and the protein is inactive.

It is found in the cytoplasm. Functionally, redox regulated molecular chaperone. Protects both thermally unfolding and oxidatively damaged proteins from irreversible aggregation. Plays an important role in the bacterial defense system toward oxidative stress. The protein is 33 kDa chaperonin of Streptococcus pyogenes serotype M6 (strain ATCC BAA-946 / MGAS10394).